Reading from the N-terminus, the 466-residue chain is Uridine kinase-like protein 3 (466 aa).

The segment at 41-246 (HGQPFVIGVA…IVQHIHTKLG (206 aa)) is uridine kinase. The segment at 256–466 (NLYVIQSTFQ…GDRYFGTDDE (211 aa)) is uracil phosphoribosyltransferase. GTP contacts are provided by residues K280, R289, and 323-326 (CKKL). 5-phospho-alpha-D-ribose 1-diphosphate contacts are provided by R333 and R358. Residue R378 coordinates GTP. Residues D384, 389–392 (TGNS), and E455 each bind 5-phospho-alpha-D-ribose 1-diphosphate. 454–456 (GEF) is a binding site for uracil.

The protein in the N-terminal section; belongs to the uridine kinase family. In the C-terminal section; belongs to the UPRTase family. Mg(2+) serves as cofactor.

The catalysed reaction is UMP + diphosphate = 5-phospho-alpha-D-ribose 1-diphosphate + uracil. It carries out the reaction cytidine + ATP = CMP + ADP + H(+). It catalyses the reaction uridine + ATP = UMP + ADP + H(+). Its pathway is pyrimidine metabolism; UMP biosynthesis via salvage pathway; UMP from uracil: step 1/1. It functions in the pathway pyrimidine metabolism; CTP biosynthesis via salvage pathway; CTP from cytidine: step 1/3. The protein operates within pyrimidine metabolism; UMP biosynthesis via salvage pathway; UMP from uridine: step 1/1. Allosterically activated by GTP. Involved in the pyrimidine salvage pathway. The uracil phosphoribosyltransferase (UPRT) activity, that catalyzes the conversion of uracil and 5-phospho-alpha-D-ribose 1-diphosphate (PRPP) to UMP and diphosphate, is unsure. In Arabidopsis thaliana (Mouse-ear cress), this protein is Uridine kinase-like protein 3 (UKL3).